A 236-amino-acid chain; its full sequence is 2-C-methyl-D-erythritol 4-phosphate cytidylyltransferase (236 aa).

It belongs to the IspD/TarI cytidylyltransferase family. IspD subfamily.

The enzyme catalyses 2-C-methyl-D-erythritol 4-phosphate + CTP + H(+) = 4-CDP-2-C-methyl-D-erythritol + diphosphate. The protein operates within isoprenoid biosynthesis; isopentenyl diphosphate biosynthesis via DXP pathway; isopentenyl diphosphate from 1-deoxy-D-xylulose 5-phosphate: step 2/6. Catalyzes the formation of 4-diphosphocytidyl-2-C-methyl-D-erythritol from CTP and 2-C-methyl-D-erythritol 4-phosphate (MEP). The chain is 2-C-methyl-D-erythritol 4-phosphate cytidylyltransferase from Burkholderia orbicola (strain AU 1054).